Here is a 429-residue protein sequence, read N- to C-terminus: Fc receptor-like protein 1 (429 aa).

The signal sequence occupies residues 1–16 (MLPRLLLLICAPLCEP). 3 consecutive Ig-like C2-type domains span residues 17-104 (AELF…SQIN), 109-200 (PVAD…VSIT), and 208-291 (PILM…EAVT). Over 17 to 307 (AELFLIASPS…TGARSNHLTS (291 aa)) the chain is Extracellular. 3 disulfide bridges follow: cysteine 38–cysteine 86, cysteine 134–cysteine 183, and cysteine 229–cysteine 276. N-linked (GlcNAc...) asparagine glycosylation occurs at asparagine 293. A helical transmembrane segment spans residues 308–328 (GVIEGLLSTLGPATVALLFCY). Topologically, residues 329–429 (GLKRKIGRRS…ITDVDYEDAM (101 aa)) are cytoplasmic. Short sequence motifs (ITIM motif) lie at residues 354–359 (FTYLNS), 367–372 (PIYENV), 379–384 (EVYSLA), 410–415 (DIYSRL), and 423–428 (VDYEDA).

In terms of assembly, interacts with ABL1. Interacts with GRB2 and SOS1. Interacts with SHIP-1/INPP5D. Phosphorylated on tyrosines upon activation. Primarily expressed in secondary lymphoid tissues by mature subsets of B-cells. Detected in spleen, lymph node, heart, skeletal muscle, kidney, liver and placenta. Specifically expressed by mature B lineage cells with higher expression in naive versus memory B-cells (at protein level).

The protein resides in the cell membrane. Functionally, type I transmembrane surface glycoprotein preferentially expressed by B-cells that regulates BCR-mediated signaling responses. Recruits ABL1 as the intracellular effector molecule to enhance B-cell activation. Also plays a negative role by suppressing ERK activation under homeostatic and BCR-stimulated conditions in a GRB2-dependent manner. The sequence is that of Fc receptor-like protein 1 (FCRL1) from Homo sapiens (Human).